Here is a 568-residue protein sequence, read N- to C-terminus: COMPASS component cclA (568 aa).

The tract at residues methionine 1–proline 113 is disordered. Basic and acidic residues-rich tracts occupy residues lysine 68–lysine 77 and proline 89–glutamine 98. In terms of domain architecture, B30.2/SPRY spans alanine 160 to tyrosine 353.

It belongs to the cclA family. Component of the COMPASS complex.

It is found in the nucleus. It localises to the chromosome. The protein resides in the telomere. Component of the COMPASS (Set1C) complex that specifically mono-, di- and trimethylates histone H3 to form H3K4me1/2/3, which subsequently plays a role in telomere length maintenance and transcription elongation regulation. Controls the production of several secondary metabolites, including colletochlorins, higginsianins and sclerosporide. Plays a key role in mycelial growth, sporulation, spore germination and virulence. The polypeptide is COMPASS component cclA (Colletotrichum higginsianum (strain IMI 349063) (Crucifer anthracnose fungus)).